Consider the following 1231-residue polypeptide: uncharacterized protein (1231 aa).

Disordered stretches follow at residues 171–197 (LKPDESIKSSMKKNVDGTGDSNKQHDD), 210–259 (DESF…HLPT), and 389–547 (ASPR…RSSR). Over residues 440 to 450 (RSRHSHKRRSI) the composition is skewed to basic residues. 4 positions are modified to phosphoserine: serine 449, serine 451, serine 453, and serine 455. Positions 458-502 (RGGRRAVRRSRSRSPRRSYNRGSTRSRSRSMRHRSRSPAHYRGRG) are enriched in basic residues. Over residues 503-541 (RGREPASKERGSSSRDFGGRHSLQRERERSSEYYHRNEG) the composition is skewed to basic and acidic residues. Tyrosine 549 is modified (phosphotyrosine). Disordered regions lie at residues 570–591 (KTSSISPTASSNKEKEKEASEP), 950–981 (PNLDRDMSSMPINKQRRGRNTPSIMLDDDDEE), and 1058–1203 (TLSK…PPFN). 2 positions are modified to phosphoserine: serine 573 and serine 589. Threonine 970 is subject to Phosphothreonine. Position 972 is a phosphoserine (serine 972). The segment covering 1076–1103 (YMMNQQHGAPNAQNAPNLGQNPGQNLGQ) has biased composition (polar residues). The span at 1118-1127 (QQQQQQQQQQ) shows a compositional bias: low complexity. Positions 1178–1203 (PPGPGGYVGPPPNPWASNVPPQPPFN) are enriched in pro residues.

This is an uncharacterized protein from Drosophila melanogaster (Fruit fly).